Consider the following 663-residue polypeptide: MLRSCDIDAIQKAYQSIIWKHEQDVKISSTFPNSAIFCQKRFIILTPELGFTHAYCRHVKPLYLFCDRQRHVKSKIAICDPLNCALSKLKFTAIIEKNTEVQYQKHLELQTSFYRNPMFLQIEKFIQDFQRWICGDFENTNKKERIKLEPFQKSILIHIIFFISVTKLPTLANHVLDYLKYKFDIEFINESSVNILKQKASVFLVPRRHGKTWFMIPVICFLLKNLEGISIGYVAHQKHVSHFVMKDVEFKCRRFFPQKNITCQDNVITIEHETIKSTALFASCYNTHSIRGQSFNLLIVDESHFIKKDAFSTILGFLPQSSTKIIFISSTNSGNHSTSFLTKLSNSPFEMLTVVSYVCEDHVHILNDRGNATTCACYRLHKPKFISINADVKKTADLFLEGAFKHEIMGGSLCNVVNDTLITEQGLIEFDLFRYSTISKQIIPFLGKELYIYIDPAYTINRRASGTGVAAIGTYGDQYIIYGMEHYFLESLLSNSDASIAECASHMILAVLELHPFFTELKIIIEGNSNQSSAVKIACILKQTISVIRYKHITFFHTLDQSQIAQPFYLLGREKRLAVEYFISNFNSGYIKASQELISFTIKITYDPIEYVIEQIKNLHQININEHVTYNAKKQTCSDDLLISIIMAIYMCHEGKQTSFKEI.

The Walker A motif signature appears at 205 to 212 (VPRRHGKT). Residues 297 to 302 (LLIVDE) carry the Walker B motif motif. The For ATPase activity role is filled by Glu302. Catalysis depends on for nuclease activity residues Asp455, Glu526, and Asp640.

The protein belongs to the herpesviridae TRM3 protein family. As to quaternary structure, interacts with the terminase subunits TRM1 and TRM2. Interacts with portal protein.

Its subcellular location is the host nucleus. Its function is as follows. Component of the molecular motor that translocates viral genomic DNA in empty capsid during DNA packaging. Forms a tripartite terminase complex together with TRM1 and TRM2 in the host cytoplasm. Once the complex reaches the host nucleus, it interacts with the capsid portal vertex. This portal forms a ring in which genomic DNA is translocated into the capsid. TRM3 carries an RNase H-like nuclease activity that plays an important role for the cleavage of concatemeric viral DNA into unit length genomes. In Human herpesvirus 7 (strain JI) (HHV-7), this protein is Tripartite terminase subunit 3.